The chain runs to 285 residues: 4-diphosphocytidyl-2-C-methyl-D-erythritol kinase (285 aa).

Lysine 12 is an active-site residue. 95–105 (PMGGGVGGGSS) is a binding site for ATP. Residue aspartate 137 is part of the active site.

The protein belongs to the GHMP kinase family. IspE subfamily.

It carries out the reaction 4-CDP-2-C-methyl-D-erythritol + ATP = 4-CDP-2-C-methyl-D-erythritol 2-phosphate + ADP + H(+). Its pathway is isoprenoid biosynthesis; isopentenyl diphosphate biosynthesis via DXP pathway; isopentenyl diphosphate from 1-deoxy-D-xylulose 5-phosphate: step 3/6. Catalyzes the phosphorylation of the position 2 hydroxy group of 4-diphosphocytidyl-2C-methyl-D-erythritol. This chain is 4-diphosphocytidyl-2-C-methyl-D-erythritol kinase, found in Actinobacillus pleuropneumoniae serotype 3 (strain JL03).